The sequence spans 103 residues: DNA-directed RNA polymerase subunit omega (103 aa).

Residues 52–103 are disordered; sequence EIESGNVTIHPDPEGKREAVRRRIEEEKRRKEEEEKKIKEQIAKEKEDGEKI. The segment covering 62 to 103 has biased composition (basic and acidic residues); it reads PDPEGKREAVRRRIEEEKRRKEEEEKKIKEQIAKEKEDGEKI.

Belongs to the RNA polymerase subunit omega family. As to quaternary structure, the RNAP catalytic core consists of 2 alpha, 1 beta, 1 beta' and 1 omega subunit. When a sigma factor is associated with the core the holoenzyme is formed, which can initiate transcription.

The catalysed reaction is RNA(n) + a ribonucleoside 5'-triphosphate = RNA(n+1) + diphosphate. Its function is as follows. Promotes RNA polymerase assembly. Latches the N- and C-terminal regions of the beta' subunit thereby facilitating its interaction with the beta and alpha subunits. This is DNA-directed RNA polymerase subunit omega from Streptococcus pneumoniae serotype 19F (strain G54).